A 907-amino-acid chain; its full sequence is Schlafen family member 13 (907 aa).

The tract at residues 1–353 (MEIHPSLVVE…WVRMMVDIGP (353 aa)) is n'-domain region. Active-site residues include glutamate 205 and glutamate 210. Positions 281, 283, and 318 each coordinate Zn(2+). 604–611 (GMPGSGKT) provides a ligand contact to ATP.

It belongs to the Schlafen family. Subgroup III subfamily. The cofactor is Mg(2+).

It localises to the cytoplasm. Endoribonuclease that cleaves tRNAs and rRNAs. Cleaves tRNAs 11 nucleotides from the 3'-terminus at the acceptor stem. Does not act on tRNA(Sec). The sequence is that of Schlafen family member 13 from Rattus norvegicus (Rat).